The sequence spans 492 residues: Falcipain-3 (492 aa).

The Cytoplasmic segment spans residues 1–35; the sequence is MEYHMEYSPNEVIKQEREVFVGKEKSGSKFKRKRS. Residues 1-242 constitute a propeptide, activation peptide; that stretch reads MEYHMEYSPN…LNLKTHGPFK (242 aa). The Bipartite vacuolar targeting signal 1 signature appears at 16–25; that stretch reads EREVFVGKEK. The helical; Signal-anchor for type II membrane protein transmembrane segment at 36 to 56 threads the bilayer; the sequence is IFIVLTVSICFMFALMLFYFT. At 57-492 the chain is on the lumenal side; sequence RNENNKTLFT…GTEAYVPLLE (436 aa). Asn-61 carries N-linked (GlcNAc...) asparagine glycosylation. The short motif at 84-105 is the Bipartite vacuolar targeting signal 2 element; it reads KSESGKKFIVSKLEELISSYDK. An N-linked (GlcNAc...) asparagine glycan is attached at Asn-129. The Nose motif; required for the correct folding of the mature form signature appears at 251–268; sequence EANYEDVIKKYKPADAKL. Cystine bridges form between Cys-290–Cys-331, Cys-324–Cys-365, Cys-350–Cys-370, and Cys-419–Cys-480. Residue Cys-293 is part of the active site. Residue His-425 is part of the active site. The Arm motif; binds to host hemoglobin and required for the inhibitory interaction between the propeptide and the catalytic domain motif lies at 436–445; that stretch reads DIYNEDTGRM. The active site involves Asn-455.

Belongs to the peptidase C1 family. In terms of processing, auto-cleavage occurs at acidic pH. The proenzyme is the predominant form in late trophozoites and both the pro and mature enzyme are present in schizonts.

It is found in the membrane. The protein resides in the vacuole. It localises to the cytoplasmic vesicle membrane. Inhibited by cysteine protease inhibitor ICP. In terms of biological role, cysteine protease which cleaves native host hemoglobin and globin in the food vacuole during the asexual blood stage. Preferentially cleaves substrates which have an arginine at the P1 position and a leucine at the P2 position. In Plasmodium falciparum (isolate 3D7), this protein is Falcipain-3.